Reading from the N-terminus, the 549-residue chain is Probable acyl-activating enzyme 10 (549 aa).

This sequence belongs to the ATP-dependent AMP-binding enzyme family. As to expression, expressed at low levels in roots.

May act as an acid--thiol ligase that activates carboxylic acids by forming acyl-CoAs. The sequence is that of Probable acyl-activating enzyme 10 (AEE10) from Arabidopsis thaliana (Mouse-ear cress).